A 126-amino-acid chain; its full sequence is Protein ApaG (126 aa).

The ApaG domain occupies 2 to 126 (DVIQPCIKIQ…FRLAIPNVLN (125 aa)).

The chain is Protein ApaG from Vibrio campbellii (strain ATCC BAA-1116).